The primary structure comprises 419 residues: UDP-N-acetylglucosamine 1-carboxyvinyltransferase (419 aa).

22-23 (KN) provides a ligand contact to phosphoenolpyruvate. R93 serves as a coordination point for UDP-N-acetyl-alpha-D-glucosamine. Residue C117 is the Proton donor of the active site. The residue at position 117 (C117) is a 2-(S-cysteinyl)pyruvic acid O-phosphothioketal. The UDP-N-acetyl-alpha-D-glucosamine site is built by D307 and I329.

The protein belongs to the EPSP synthase family. MurA subfamily.

The protein localises to the cytoplasm. It catalyses the reaction phosphoenolpyruvate + UDP-N-acetyl-alpha-D-glucosamine = UDP-N-acetyl-3-O-(1-carboxyvinyl)-alpha-D-glucosamine + phosphate. It functions in the pathway cell wall biogenesis; peptidoglycan biosynthesis. In terms of biological role, cell wall formation. Adds enolpyruvyl to UDP-N-acetylglucosamine. This Shewanella baltica (strain OS195) protein is UDP-N-acetylglucosamine 1-carboxyvinyltransferase.